Reading from the N-terminus, the 340-residue chain is GTPase Obg (340 aa).

The region spanning 1–158 is the Obg domain; it reads MSFIDEAKVY…KYITLKLKII (158 aa). The OBG-type G domain maps to 159–325; it reads SDIGIIGLPN…LSTLIQYIHK (167 aa). Residues 165 to 172, 190 to 194, 211 to 214, 278 to 281, and 306 to 308 contribute to the GTP site; these read GLPNAGKS, FTTLE, DIPG, NKSD, and SSI. Ser172 and Thr192 together coordinate Mg(2+).

It belongs to the TRAFAC class OBG-HflX-like GTPase superfamily. OBG GTPase family. Monomer. Mg(2+) is required as a cofactor.

The protein localises to the cytoplasm. Its function is as follows. An essential GTPase which binds GTP, GDP and possibly (p)ppGpp with moderate affinity, with high nucleotide exchange rates and a fairly low GTP hydrolysis rate. Plays a role in control of the cell cycle, stress response, ribosome biogenesis and in those bacteria that undergo differentiation, in morphogenesis control. This is GTPase Obg from Ehrlichia chaffeensis (strain ATCC CRL-10679 / Arkansas).